Consider the following 129-residue polypeptide: Allergen Bra j 1-E (129 aa).

The tract at residues 28-47 (KQAMQSGSGPQPQGPQQRPP) is disordered. The segment covering 32-47 (QSGSGPQPQGPQQRPP) has biased composition (low complexity).

This sequence belongs to the 2S seed storage albumins family. As to quaternary structure, the mature protein consists of a small and a large chain linked by two disulfide bonds.

This is a 2S seed storage protein. The polypeptide is Allergen Bra j 1-E (Brassica juncea (Indian mustard)).